Here is a 372-residue protein sequence, read N- to C-terminus: Methylthioribose-1-phosphate isomerase 2 (372 aa).

Asp254 serves as the catalytic Proton donor.

Belongs to the eIF-2B alpha/beta/delta subunits family. MtnA subfamily.

It localises to the cytoplasm. The protein resides in the nucleus. The enzyme catalyses 5-(methylsulfanyl)-alpha-D-ribose 1-phosphate = 5-(methylsulfanyl)-D-ribulose 1-phosphate. The protein operates within amino-acid biosynthesis; L-methionine biosynthesis via salvage pathway; L-methionine from S-methyl-5-thio-alpha-D-ribose 1-phosphate: step 1/6. In terms of biological role, catalyzes the interconversion of methylthioribose-1-phosphate (MTR-1-P) into methylthioribulose-1-phosphate (MTRu-1-P). The polypeptide is Methylthioribose-1-phosphate isomerase 2 (Trypanosoma cruzi (strain CL Brener)).